A 604-amino-acid chain; its full sequence is Ectonucleoside triphosphate diphosphohydrolase 7 (604 aa).

The Cytoplasmic portion of the chain corresponds to 1-28 (MARISFSYLCPASWYFTVPTVSPFLRQR). The chain crosses the membrane as a helical span at residues 29 to 49 (VAFLGLFFISCLLLLMLIIDF). The Vesicular segment spans residues 50 to 546 (RHWSASLPRD…QAHGSWFRLS (497 aa)). Glutamate 217 serves as the catalytic Proton acceptor. The N-linked (GlcNAc...) asparagine glycan is linked to asparagine 330. Cysteine 448 and cysteine 477 form a disulfide bridge. A helical membrane pass occupies residues 547 to 567 (FVYNHYLFFACILVVLLAIVL). Residues 568-604 (YLLRLRRIHHRQTRASAPLDLLWLEEVVPMMGVQVGP) are Cytoplasmic-facing.

Belongs to the GDA1/CD39 NTPase family. Requires Ca(2+) as cofactor. Mg(2+) serves as cofactor.

The protein resides in the cytoplasmic vesicle membrane. The catalysed reaction is a ribonucleoside 5'-triphosphate + H2O = a ribonucleoside 5'-diphosphate + phosphate + H(+). The enzyme catalyses UTP + H2O = UDP + phosphate + H(+). It carries out the reaction GTP + H2O = GDP + phosphate + H(+). It catalyses the reaction CTP + H2O = CDP + phosphate + H(+). Functionally, catalyzes the hydrolysis of nucleoside triphosphates and diphosphates in a calcium- or magnesium-dependent manner. Preferentially hydrolyzes nucleoside 5'-triphosphates, with substrate preference for UTP &gt; GTP &gt; CTP. Hydrolyzes ATP and nucleoside diphosphates only to a minor extent. This Pongo abelii (Sumatran orangutan) protein is Ectonucleoside triphosphate diphosphohydrolase 7 (ENTPD7).